The chain runs to 550 residues: Glucose-6-phosphate isomerase (550 aa).

D-glucose 6-phosphate contacts are provided by residues 164–165, 215–220, Gln359, Glu363, and His394; these read GS and SKTFTT. The active-site Proton donor is the Glu363. The active site involves His394. Thr455 bears the Phosphothreonine mark. Lys516 contributes to the D-glucose 6-phosphate binding site. Lys516 is an active-site residue.

The protein belongs to the GPI family. Homodimer.

It localises to the cytoplasm. It is found in the cytosol. It carries out the reaction alpha-D-glucose 6-phosphate = beta-D-fructose 6-phosphate. It functions in the pathway carbohydrate degradation; glycolysis; D-glyceraldehyde 3-phosphate and glycerone phosphate from D-glucose: step 2/4. In the cytoplasm, catalyzes the conversion of glucose-6-phosphate to fructose-6-phosphate, the second step in glycolysis, and the reverse reaction during gluconeogenesis. This Schizosaccharomyces pombe (strain 972 / ATCC 24843) (Fission yeast) protein is Glucose-6-phosphate isomerase (pgi1).